Consider the following 1008-residue polypeptide: Chitin synthase C (1008 aa).

The segment at 1 to 160 is disordered; that stretch reads MIYEMMVMKR…GGRTIDPNNR (160 aa). Positions 10–19 are enriched in low complexity; it reads RSANSRAQNN. The span at 34–45 shows a compositional bias: polar residues; the sequence is ESPSRPVSSLGN. Asparagine 312 carries an N-linked (GlcNAc...) asparagine glycan. 5 helical membrane-spanning segments follow: residues 642 to 662, 682 to 702, 717 to 737, 755 to 775, and 787 to 807; these read FMQL…FYFI, IFVI…IISM, IIVY…LVVI, LFVN…YASF, and SAAY…YAFC. Asparagine 833 is a glycosylation site (N-linked (GlcNAc...) asparagine). Transmembrane regions (helical) follow at residues 887–907 and 910–930; these read MVSI…EVYG and AGGT…LALI. Asparagine 961 is a glycosylation site (N-linked (GlcNAc...) asparagine).

It belongs to the chitin synthase family. Class II subfamily.

The protein localises to the cell membrane. It catalyses the reaction [(1-&gt;4)-N-acetyl-beta-D-glucosaminyl](n) + UDP-N-acetyl-alpha-D-glucosamine = [(1-&gt;4)-N-acetyl-beta-D-glucosaminyl](n+1) + UDP + H(+). Functionally, polymerizes chitin, a structural polymer of the cell wall and septum, by transferring the sugar moiety of UDP-GlcNAc to the non-reducing end of the growing chitin polymer. Involved in cell wall integrity and mycelial morphology. Plays an important role in septal growth or maintenance. Acts as a positive regulator of conidiation, cellular responses to oxidative stresses, and the production of malic acid. Negatively regulates the citric acid production. In Aspergillus niger (strain ATCC MYA-4892 / CBS 513.88 / FGSC A1513), this protein is Chitin synthase C.